The following is a 449-amino-acid chain: Glucose-6-phosphate isomerase (449 aa).

The active-site Proton donor is the Glu-291. Residues His-312 and Lys-426 contribute to the active site.

Belongs to the GPI family.

Its subcellular location is the cytoplasm. It catalyses the reaction alpha-D-glucose 6-phosphate = beta-D-fructose 6-phosphate. The protein operates within carbohydrate biosynthesis; gluconeogenesis. It participates in carbohydrate degradation; glycolysis; D-glyceraldehyde 3-phosphate and glycerone phosphate from D-glucose: step 2/4. Functionally, catalyzes the reversible isomerization of glucose-6-phosphate to fructose-6-phosphate. This is Glucose-6-phosphate isomerase from Streptococcus gordonii (strain Challis / ATCC 35105 / BCRC 15272 / CH1 / DL1 / V288).